A 293-amino-acid chain; its full sequence is Energy-coupling factor transporter ATP-binding protein EcfA2 (293 aa).

Residues 3–246 (ITFQKVEHRY…ADELEKIGVD (244 aa)) form the ABC transporter domain. 40-47 (GHTGSGKS) contributes to the ATP binding site.

The protein belongs to the ABC transporter superfamily. Energy-coupling factor EcfA family. In terms of assembly, forms a stable energy-coupling factor (ECF) transporter complex composed of 2 membrane-embedded substrate-binding proteins (S component), 2 ATP-binding proteins (A component) and 2 transmembrane proteins (T component).

The protein resides in the cell membrane. Functionally, ATP-binding (A) component of a common energy-coupling factor (ECF) ABC-transporter complex. Unlike classic ABC transporters this ECF transporter provides the energy necessary to transport a number of different substrates. This Bacillus cereus (strain ZK / E33L) protein is Energy-coupling factor transporter ATP-binding protein EcfA2.